The chain runs to 136 residues: ATP synthase epsilon chain (136 aa).

The protein belongs to the ATPase epsilon chain family. In terms of assembly, F-type ATPases have 2 components, CF(1) - the catalytic core - and CF(0) - the membrane proton channel. CF(1) has five subunits: alpha(3), beta(3), gamma(1), delta(1), epsilon(1). CF(0) has three main subunits: a, b and c.

Its subcellular location is the cell membrane. Functionally, produces ATP from ADP in the presence of a proton gradient across the membrane. The protein is ATP synthase epsilon chain of Ureaplasma urealyticum serovar 10 (strain ATCC 33699 / Western).